The following is a 101-amino-acid chain: Urease subunit beta (101 aa).

This sequence belongs to the urease beta subunit family. Heterotrimer of UreA (gamma), UreB (beta) and UreC (alpha) subunits. Three heterotrimers associate to form the active enzyme.

Its subcellular location is the cytoplasm. It carries out the reaction urea + 2 H2O + H(+) = hydrogencarbonate + 2 NH4(+). It participates in nitrogen metabolism; urea degradation; CO(2) and NH(3) from urea (urease route): step 1/1. This Pseudomonas paraeruginosa (strain DSM 24068 / PA7) (Pseudomonas aeruginosa (strain PA7)) protein is Urease subunit beta.